The sequence spans 113 residues: Holo-[acyl-carrier-protein] synthase (113 aa).

Aspartate 5 and glutamate 50 together coordinate Mg(2+).

The protein belongs to the P-Pant transferase superfamily. AcpS family. It depends on Mg(2+) as a cofactor.

The protein resides in the cytoplasm. It catalyses the reaction apo-[ACP] + CoA = holo-[ACP] + adenosine 3',5'-bisphosphate + H(+). Functionally, transfers the 4'-phosphopantetheine moiety from coenzyme A to a Ser of acyl-carrier-protein. This chain is Holo-[acyl-carrier-protein] synthase, found in Nautilia profundicola (strain ATCC BAA-1463 / DSM 18972 / AmH).